The primary structure comprises 336 residues: MKERIVNLETLDFETSQEVSLRPNLWEDFIGQEKIKSNLQISICAAKKRQESLDHMLFFGPPGLGKTSISHIIAKEMETNIKITAAPMIEKSGDLAAILTNLQAKDILFIDEIHRLSPAIEEVLYPAMEDFRLDIIIGSGPAAQTIKIDLPPFTLIGATTRAGMLSNPLRDRFGMSFRMQFYSPSELALIIKKAAVKLNQDIKEESADEIAKRSRGTPRIALRLLKRVRDFALVKNSSLMDLNITLHALNELGVNELGFDEADLAYLSLLANAQGKPVGLNTIAASMREDEGTIEDMIEPFLLANGYLERTAKGRIATPKTHALLKIPTLKSQTLF.

The segment at 1–182 is large ATPase domain (RuvB-L); sequence MKERIVNLET…FGMSFRMQFY (182 aa). ATP-binding positions include Leu21, Arg22, Gly63, Lys66, Thr67, Ser68, 129 to 131, Arg172, Tyr182, and Arg219; that span reads EDF. Thr67 contributes to the Mg(2+) binding site. Residues 183 to 253 are small ATPAse domain (RuvB-S); that stretch reads SPSELALIIK…ITLHALNELG (71 aa). Residues 256–336 are head domain (RuvB-H); sequence ELGFDEADLA…IPTLKSQTLF (81 aa). Arg310 and Arg315 together coordinate DNA.

The protein belongs to the RuvB family. As to quaternary structure, homohexamer. Forms an RuvA(8)-RuvB(12)-Holliday junction (HJ) complex. HJ DNA is sandwiched between 2 RuvA tetramers; dsDNA enters through RuvA and exits via RuvB. An RuvB hexamer assembles on each DNA strand where it exits the tetramer. Each RuvB hexamer is contacted by two RuvA subunits (via domain III) on 2 adjacent RuvB subunits; this complex drives branch migration. In the full resolvosome a probable DNA-RuvA(4)-RuvB(12)-RuvC(2) complex forms which resolves the HJ.

It localises to the cytoplasm. The catalysed reaction is ATP + H2O = ADP + phosphate + H(+). The RuvA-RuvB-RuvC complex processes Holliday junction (HJ) DNA during genetic recombination and DNA repair, while the RuvA-RuvB complex plays an important role in the rescue of blocked DNA replication forks via replication fork reversal (RFR). RuvA specifically binds to HJ cruciform DNA, conferring on it an open structure. The RuvB hexamer acts as an ATP-dependent pump, pulling dsDNA into and through the RuvAB complex. RuvB forms 2 homohexamers on either side of HJ DNA bound by 1 or 2 RuvA tetramers; 4 subunits per hexamer contact DNA at a time. Coordinated motions by a converter formed by DNA-disengaged RuvB subunits stimulates ATP hydrolysis and nucleotide exchange. Immobilization of the converter enables RuvB to convert the ATP-contained energy into a lever motion, pulling 2 nucleotides of DNA out of the RuvA tetramer per ATP hydrolyzed, thus driving DNA branch migration. The RuvB motors rotate together with the DNA substrate, which together with the progressing nucleotide cycle form the mechanistic basis for DNA recombination by continuous HJ branch migration. Branch migration allows RuvC to scan DNA until it finds its consensus sequence, where it cleaves and resolves cruciform DNA. The polypeptide is Holliday junction branch migration complex subunit RuvB (Helicobacter pylori (strain G27)).